The primary structure comprises 79 residues: Small ribosomal subunit protein uS17 (79 aa).

The protein belongs to the universal ribosomal protein uS17 family. As to quaternary structure, part of the 30S ribosomal subunit.

Functionally, one of the primary rRNA binding proteins, it binds specifically to the 5'-end of 16S ribosomal RNA. The protein is Small ribosomal subunit protein uS17 of Bartonella tribocorum (strain CIP 105476 / IBS 506).